Here is a 223-residue protein sequence, read N- to C-terminus: Ribose-5-phosphate isomerase A (223 aa).

Substrate is bound by residues 32 to 35 (TGST), 85 to 88 (DGAD), and 98 to 101 (KGGG). The Proton acceptor role is filled by Glu107. Residue Lys125 participates in substrate binding.

It belongs to the ribose 5-phosphate isomerase family. Homodimer.

It carries out the reaction aldehydo-D-ribose 5-phosphate = D-ribulose 5-phosphate. Its pathway is carbohydrate degradation; pentose phosphate pathway; D-ribose 5-phosphate from D-ribulose 5-phosphate (non-oxidative stage): step 1/1. Functionally, catalyzes the reversible conversion of ribose-5-phosphate to ribulose 5-phosphate. This Pseudomonas syringae pv. syringae (strain B728a) protein is Ribose-5-phosphate isomerase A.